Here is a 1065-residue protein sequence, read N- to C-terminus: Inversin (1065 aa).

16 ANK repeats span residues 13–42 (SLASQVHAAAVNGDKGALQRLIVGNSALKD), 47–76 (FGRTPLMYCVLADRLDCADALLKAGADVNK), 80–110 (SQRTALHLAAQKGNYRFMKLLLTRRANWMQK), 113–144 (EEMTPLHLTTRHRSPKCLALLLKFMAPGEVDT), 148–177 (NKQTALHWSAYYNNPEHVKLLIKHDSNIGI), 181–213 (EGKIPLHWAANHKDPSAVHTVRCILDAAPTESL), 220–250 (EGRTPLHFAVADGNVTVVDVLTSYESCNITS), 254–283 (LFRTPLHWAALLGHAQIVHLLLERNKSGTI), 288–317 (QGATPLHYAAQSNFAETVKVFLKHPSVKDD), 321–350 (EGRTSFMWAAGKGSDDVLRTMLSLKSDIDI), 356–385 (YGGTALHAAALSGHVSTVKLLLENNAQVDA), 389–418 (MKHTPLFRACEMGHKDVIQTLIKGGARVDL), 422–451 (DGHSLLHWAALGGNADVCQILIENKINPNV), 455–484 (AGRTPLQCAAYGGYINCMAVLMENNADPNI), 488–517 (EGRTALHWSCNNGYLDAIKLLLDFAAFPNQ), and 523–553 (ERYTPLDYALLGERHEVIQFMLEHGALSIAA). 3-hydroxyasparagine is present on N75. The short motif at 490 to 498 (RTALHWSCN) is the D-box 1 element. In terms of domain architecture, IQ 1 spans 555–584 (QDIAAFKIQAVYKGYKVRKAFRDRKNLLMK). Positions 589-616 (RKDAAAKKREEENKRKEAEQQKGRRSPD) are enriched in basic and acidic residues. 2 disordered regions span residues 589–833 (RKDA…TPRN) and 847–886 (HLPQSTEELRSGARRLETSTLSEDFQVSKETDPAPGPLSG). Residues 627–640 (PSTQDVPSRQSRAP) are compositionally biased toward polar residues. S661 is modified (phosphoserine). Over residues 677 to 686 (SSDLQGTNSR) the composition is skewed to polar residues. 6 stretches are compositionally biased toward basic and acidic residues: residues 687–697 (RPNETAREHSK), 706–715 (RPNEGSDGSR), 723–736 (EKSRGETAGDERCA), 752–762 (GPDEKGEDSRR), 770–786 (HDSHWKPSRRHDTEPKA), and 853–863 (EELRSGARRLE). Positions 909-917 (RKELFRKKN) match the D-box 2 motif. In terms of domain architecture, IQ 2 spans 916-945 (KNKAAAVIQRAWRSYQLRKHLSHLRHMKQL). The interval 976-999 (TTAVSKAPKSPSKGTSGTKSTKHS) is disordered. The span at 983 to 994 (PKSPSKGTSGTK) shows a compositional bias: low complexity.

Binds calmodulin via its IQ domains. Interacts with APC2. Interacts with alpha-, beta-, and gamma-catenin. Interacts with N-cadherin (CDH2). Interacts with microtubules. Interacts with NPHP1. Interacts with DVL1, PRICKLE (PRICKLE1 or PRICKLE2) and Strabismus (VANGL1 or VANGL2). Interacts with IQCB1; the interaction likely requires additional interactors. Component of a complex containing at least ANKS6, INVS, NEK8 and NPHP3. ANKS6 may organize complex assembly by linking INVS and NPHP3 to NEK8 and INVS may target the complex to the proximal ciliary axoneme. May be ubiquitinated via its interaction with APC2. Post-translationally, hydroxylated at Asn-75, most probably by HIF1AN. In terms of tissue distribution, widely expressed. Strongly expressed in the primary cilia of renal tubular cells.

The protein localises to the cytoplasm. It is found in the cytoskeleton. It localises to the spindle. Its subcellular location is the membrane. The protein resides in the nucleus. The protein localises to the cell projection. It is found in the cilium. Required for normal renal development and establishment of left-right axis. Probably acts as a molecular switch between different Wnt signaling pathways. Inhibits the canonical Wnt pathway by targeting cytoplasmic disheveled (DVL1) for degradation by the ubiquitin-proteasome. This suggests that it is required in renal development to oppose the repression of terminal differentiation of tubular epithelial cells by Wnt signaling. Involved in the organization of apical junctions in kidney cells together with NPHP1, NPHP4 and RPGRIP1L/NPHP8. Does not seem to be strictly required for ciliogenesis. This chain is Inversin (INVS), found in Homo sapiens (Human).